Reading from the N-terminus, the 121-residue chain is Ribosome-binding factor A (121 aa).

This sequence belongs to the RbfA family. In terms of assembly, monomer. Binds 30S ribosomal subunits, but not 50S ribosomal subunits or 70S ribosomes.

Its subcellular location is the cytoplasm. In terms of biological role, one of several proteins that assist in the late maturation steps of the functional core of the 30S ribosomal subunit. Associates with free 30S ribosomal subunits (but not with 30S subunits that are part of 70S ribosomes or polysomes). Required for efficient processing of 16S rRNA. May interact with the 5'-terminal helix region of 16S rRNA. This Clostridium acetobutylicum (strain ATCC 824 / DSM 792 / JCM 1419 / IAM 19013 / LMG 5710 / NBRC 13948 / NRRL B-527 / VKM B-1787 / 2291 / W) protein is Ribosome-binding factor A.